A 298-amino-acid chain; its full sequence is Max-like protein X (298 aa).

Residues 1-63 (MTEPGASPED…PRGCREDSSH (63 aa)) form a disordered region. Serine 7 is subject to Phosphoserine. The span at 28-37 (GRARARRGAG) shows a compositional bias: basic residues. Phosphoserine occurs at positions 45, 48, 74, 77, and 98. The disordered stretch occupies residues 91–145 (SVVSRANSIGSTSASSVPNTDDEDSDYHQEAYKESYKDRRRRAHTQAEQKRRDAI). The segment covering 94–109 (SRANSIGSTSASSVPN) has biased composition (polar residues). 2 stretches are compositionally biased toward basic and acidic residues: residues 116–127 (DYHQEAYKESYK) and 135–145 (TQAEQKRRDAI). Positions 129 to 187 (RRRRAHTQAEQKRRDAIKRGYDDLQTIVPTCQQQDFSIGSQKLSKAIVLQKTIDYIQFL) constitute a bHLH domain. The tract at residues 140 to 160 (KRRDAIKRGYDDLQTIVPTCQ) is leucine-zipper.

Efficient DNA binding requires dimerization with another bHLH protein. Binds DNA as a heterodimer with MAD1, MAD4, MNT, WBSCR14 and MLXIP. Can also bind DNA as a homodimer. In terms of tissue distribution, expressed in all tissues tested, including spleen, thymus, prostate, ovary, intestine, colon, peripheral blood leukocyte, heart, liver, skeletal muscle and kidney. Lower levels of expression in testis, brain, placenta and lung.

The protein localises to the cytoplasm. It is found in the nucleus. Functionally, transcription regulator. Forms a sequence-specific DNA-binding protein complex with MAD1, MAD4, MNT, WBSCR14 and MLXIP which recognizes the core sequence 5'-CACGTG-3'. The TCFL4-MAD1, TCFL4-MAD4, TCFL4-WBSCR14 complexes are transcriptional repressors. Plays a role in transcriptional activation of glycolytic target genes. Involved in glucose-responsive gene regulation. The chain is Max-like protein X (MLX) from Homo sapiens (Human).